The chain runs to 317 residues: Putative GTPase PH0274 (317 aa).

GTP contacts are provided by residues 54-62 (GPPGAGKST), aspartate 196, and 231-233 (VGT).

This sequence belongs to the SIMIBI class G3E GTPase family. ArgK/MeaB subfamily.

Functionally, may have GTPase activity. May also bind and hydrolyze ATP. May function as chaperone. This Pyrococcus horikoshii (strain ATCC 700860 / DSM 12428 / JCM 9974 / NBRC 100139 / OT-3) protein is Putative GTPase PH0274.